We begin with the raw amino-acid sequence, 170 residues long: Lipoprotein signal peptidase (170 aa).

Transmembrane regions (helical) follow at residues 9 to 29, 72 to 92, and 95 to 117; these read FNIF…KYLV, IFFI…ALKE, and CITR…DRLF. Active-site residues include Asp-124 and Asp-146. A helical transmembrane segment spans residues 143–163; the sequence is NFADSYVVIGMILFLVYDFFI.

It belongs to the peptidase A8 family.

Its subcellular location is the cell inner membrane. It carries out the reaction Release of signal peptides from bacterial membrane prolipoproteins. Hydrolyzes -Xaa-Yaa-Zaa-|-(S,diacylglyceryl)Cys-, in which Xaa is hydrophobic (preferably Leu), and Yaa (Ala or Ser) and Zaa (Gly or Ala) have small, neutral side chains.. Its pathway is protein modification; lipoprotein biosynthesis (signal peptide cleavage). In terms of biological role, this protein specifically catalyzes the removal of signal peptides from prolipoproteins. The chain is Lipoprotein signal peptidase from Borrelia garinii subsp. bavariensis (strain ATCC BAA-2496 / DSM 23469 / PBi) (Borreliella bavariensis).